A 217-amino-acid chain; its full sequence is GTP-binding protein yptV2 (217 aa).

GTP is bound at residue glycine 20–serine 27. The Effector region signature appears at phenylalanine 42–phenylalanine 50. Residues aspartate 68–glutamine 72 and asparagine 126–aspartate 129 each bind GTP. The interval glutamine 198–arginine 217 is disordered. The span at arginine 201–glutamine 211 shows a compositional bias: polar residues. 2 S-geranylgeranyl cysteine lipidation sites follow: cysteine 215 and cysteine 216.

It belongs to the small GTPase superfamily. Rab family.

It is found in the cell membrane. Functionally, protein transport. Probably involved in vesicular traffic. In Volvox carteri (Green alga), this protein is GTP-binding protein yptV2 (YPTV2).